The primary structure comprises 94 residues: Pyrimidine/purine nucleoside phosphorylase (94 aa).

The protein belongs to the nucleoside phosphorylase PpnP family.

It carries out the reaction a purine D-ribonucleoside + phosphate = a purine nucleobase + alpha-D-ribose 1-phosphate. The catalysed reaction is adenosine + phosphate = alpha-D-ribose 1-phosphate + adenine. It catalyses the reaction cytidine + phosphate = cytosine + alpha-D-ribose 1-phosphate. The enzyme catalyses guanosine + phosphate = alpha-D-ribose 1-phosphate + guanine. It carries out the reaction inosine + phosphate = alpha-D-ribose 1-phosphate + hypoxanthine. The catalysed reaction is thymidine + phosphate = 2-deoxy-alpha-D-ribose 1-phosphate + thymine. It catalyses the reaction uridine + phosphate = alpha-D-ribose 1-phosphate + uracil. The enzyme catalyses xanthosine + phosphate = alpha-D-ribose 1-phosphate + xanthine. Catalyzes the phosphorolysis of diverse nucleosides, yielding D-ribose 1-phosphate and the respective free bases. Can use uridine, adenosine, guanosine, cytidine, thymidine, inosine and xanthosine as substrates. Also catalyzes the reverse reactions. The polypeptide is Pyrimidine/purine nucleoside phosphorylase (Alcanivorax borkumensis (strain ATCC 700651 / DSM 11573 / NCIMB 13689 / SK2)).